Reading from the N-terminus, the 663-residue chain is Translation factor GUF1 homolog, mitochondrial (663 aa).

The N-terminal 33 residues, 1–33 (MAGAAALRRSARRVVLPGAYALSRALQHPERLL), are a transit peptide targeting the mitochondrion. In terms of domain architecture, tr-type G spans 55-247 (ERVRNFSIIA…AVIERIPSPP (193 aa)). Residues 64 to 71 (AHVDHGKS), 140 to 144 (DTPGH), and 194 to 197 (NKID) contribute to the GTP site.

It belongs to the TRAFAC class translation factor GTPase superfamily. Classic translation factor GTPase family. LepA subfamily.

Its subcellular location is the mitochondrion inner membrane. It carries out the reaction GTP + H2O = GDP + phosphate + H(+). Functionally, promotes mitochondrial protein synthesis. May act as a fidelity factor of the translation reaction, by catalyzing a one-codon backward translocation of tRNAs on improperly translocated ribosomes. Binds to mitochondrial ribosomes in a GTP-dependent manner. The chain is Translation factor GUF1 homolog, mitochondrial from Oryza sativa subsp. japonica (Rice).